The sequence spans 360 residues: Phospho-N-acetylmuramoyl-pentapeptide-transferase (360 aa).

Helical transmembrane passes span 27 to 47 (ILGVLTALAISLLVGNKVIVL), 73 to 93 (TMGGALIIFSISVSTLLWGDL), 97 to 117 (YVWVVLLVMLAFGVVGWVDDY), 145 to 165 (AFYLYYTASTPAETALIVPLF), 168 to 188 (VAIPLGMFFIVLTYFVIVGTS), 199 to 219 (GLAILPTVLVGGALGVFAYLT), 236 to 256 (SGELLVFCAALAGAGLGFLWF), 263 to 283 (IFMGDVGSLALGAALGTIAVI), 288 to 308 (LVLFIMGGVFVMETVSVILQV), and 337 to 357 (KVIVRFWIITVCLVLVGFATL).

It belongs to the glycosyltransferase 4 family. MraY subfamily. Mg(2+) serves as cofactor.

The protein resides in the cell inner membrane. The catalysed reaction is UDP-N-acetyl-alpha-D-muramoyl-L-alanyl-gamma-D-glutamyl-meso-2,6-diaminopimeloyl-D-alanyl-D-alanine + di-trans,octa-cis-undecaprenyl phosphate = di-trans,octa-cis-undecaprenyl diphospho-N-acetyl-alpha-D-muramoyl-L-alanyl-D-glutamyl-meso-2,6-diaminopimeloyl-D-alanyl-D-alanine + UMP. It participates in cell wall biogenesis; peptidoglycan biosynthesis. Functionally, catalyzes the initial step of the lipid cycle reactions in the biosynthesis of the cell wall peptidoglycan: transfers peptidoglycan precursor phospho-MurNAc-pentapeptide from UDP-MurNAc-pentapeptide onto the lipid carrier undecaprenyl phosphate, yielding undecaprenyl-pyrophosphoryl-MurNAc-pentapeptide, known as lipid I. The chain is Phospho-N-acetylmuramoyl-pentapeptide-transferase from Marinomonas sp. (strain MWYL1).